Reading from the N-terminus, the 903-residue chain is MSNVRISEIANELGYPSKEIVEKAQELGLKVKTHSNAVSLEEAEAIYEYVQSGVIPEKFKKEKPKAKPKKEAKEPSEKEVGKKQTKAKEEKPAKASTTQKKDTKSHKIGETKAKKDQESVKKQKVEVQPKQEQTKQELQPKEAEFKSEVKDEISEPQKPKESLADVSQRRRGLMIVKKKKEFESAPVRRDENRVKSTDAVEINSLKNMFASSDENLARKKKKDKKPVVATKKDSAQKMDLLGSSDFGDIVIEDEDVVVLPDFSFKTPTPQPMQKTKQPNVLKPTINNTINPFGEGGIQRRARKKHKKPENKQNSEAVTSINIPKEIRVYEFAEKLNKQPSEIIGKLFMLGMMTTKNDFLDEDAIEILADEFNVEVNIIDDQKEFDYVAAYEEEVRDDENLLPRAPVITIMGHVDHGKTSLLDYIRKSRVAAGEAGGITQHVGAYMVNKNGKNITFIDTPGHEAFTAMRARGAGVTDIVIIVVAADDGVKPQTKEAVNHAKAAGVPIIIAINKMDKEAANPDLVKTGLAELDIMPTEWGGKYEFVPISAKTGMGIDDLLEIVLLQAEILELKANPKASAKASVIESSLQKGRGPVATIIVENGTLRVGDTVVAGVAYGKIRSLLDDQGRPLQEIKPGECGVIVGLSEIAEAGETLIGVKTDKEAREYAQKKAEYLRQKELSKSTKVSLDELSAKIAEGELKTLPVIVKADVGGSLEALKASLEKLANNEIKVDIIHSGVGGITQSDVALASASKDCVILGFNIRPTGEIKEKAKESGVEIKTYNVIYNLIDDVKALLGGLMSPIIREEQLGQAQVRQVINVPKIGAIAGCLVTEGTINRGAKIRLIRDGVVVYEGMVSSLKRFKDDVKEVAKGYECGVGIEGCNDIRENDYIESFKEIEEQAKL.

2 disordered regions span residues 57–171 and 267–318; these read EKFK…QRRR and PTPQ…EAVT. Positions 69–163 are enriched in basic and acidic residues; sequence KKEAKEPSEK…SEPQKPKESL (95 aa). A compositionally biased stretch (low complexity) spans 267–278; the sequence is PTPQPMQKTKQP. A compositionally biased stretch (basic residues) spans 299–308; that stretch reads RRARKKHKKP. In terms of domain architecture, tr-type G spans 402-569; it reads PRAPVITIMG…IVLLQAEILE (168 aa). The G1 stretch occupies residues 411 to 418; sequence GHVDHGKT. Residue 411-418 coordinates GTP; sequence GHVDHGKT. Positions 436 to 440 are G2; the sequence is GITQH. The tract at residues 457 to 460 is G3; it reads DTPG. GTP contacts are provided by residues 457-461 and 511-514; these read DTPGH and NKMD. The interval 511–514 is G4; it reads NKMD. The segment at 547–549 is G5; that stretch reads SAK.

Belongs to the TRAFAC class translation factor GTPase superfamily. Classic translation factor GTPase family. IF-2 subfamily.

It is found in the cytoplasm. One of the essential components for the initiation of protein synthesis. Protects formylmethionyl-tRNA from spontaneous hydrolysis and promotes its binding to the 30S ribosomal subunits. Also involved in the hydrolysis of GTP during the formation of the 70S ribosomal complex. This Campylobacter curvus (strain 525.92) protein is Translation initiation factor IF-2.